The chain runs to 149 residues: MKVLLLEDVKNLGKAGEVCEVKDGYGNNFLIANQKAKLATNEVINKYKAEVKKKAEKEALEKAQKLQMVETLQTITLTIHKKVGANGSLFGAITKEEITERLKEQHASLNLDKKDIELKHPIKSTGIYEIEVKLGSGVVGVFKIDVVAE.

This sequence belongs to the bacterial ribosomal protein bL9 family.

Functionally, binds to the 23S rRNA. In Helicobacter pylori (strain ATCC 700392 / 26695) (Campylobacter pylori), this protein is Large ribosomal subunit protein bL9.